The sequence spans 2153 residues: Non-reducing polyketide synthase albA (2153 aa).

Positions 8-244 (YLFGDQTSDI…VKAPIHGPYH (237 aa)) are N-terminal acylcarrier protein transacylase domain (SAT). A Ketosynthase family 3 (KS3) domain is found at 375-806 (NSKIAIIGMS…GGNTALLLED (432 aa)). Active-site for beta-ketoacyl synthase activity residues include Cys-547, His-682, and His-724. Residues 912 to 1232 (FVFTGQGAQY…LASLHLAGID (321 aa)) form a malonyl-CoA:ACP transacylase (MAT) domain region. Ser-1001 serves as the catalytic For acyl/malonyl transferase activity. Residues 1286–1425 (HEYLTTAAQK…CTVRFFDCAA (140 aa)) are N-terminal hotdog fold. The PKS/mFAS DH domain occupies 1286–1598 (HEYLTTAAQK…FQALSRKILD (313 aa)). Residues 1290 to 1603 (TTAAQKVIET…RKILDTVLPP (314 aa)) are product template (PT) domain. The Proton acceptor; for dehydratase activity role is filled by His-1326. The interval 1452–1598 (DAHRLGRGMV…FQALSRKILD (147 aa)) is C-terminal hotdog fold. Asp-1511 serves as the catalytic Proton donor; for dehydratase activity. Residues 1608-1643 (KGPARPAASAQKAAPAAAASKSRASAPAPAKPAAKP) form a disordered region. A compositionally biased stretch (low complexity) spans 1610–1643 (PARPAASAQKAAPAAAASKSRASAPAPAKPAAKP). The region spanning 1643–1720 (PSAPSLVKRA…DFKQFLAPMS (78 aa)) is the Carrier 1 domain. Residue Ser-1680 is modified to O-(pantetheine 4'-phosphoryl)serine. The tract at residues 1720-1765 (SQGEASDGSTSDPESSSSFNGGSSTDESSAGSPVSSPPNEKVTQVE) is disordered. The span at 1725 to 1748 (SDGSTSDPESSSSFNGGSSTDESS) shows a compositional bias: low complexity. The span at 1749–1765 (AGSPVSSPPNEKVTQVE) shows a compositional bias: polar residues. Residues 1764–1841 (VEQHATIKEI…DVEDALGLKP (78 aa)) enclose the Carrier 2 domain. Ser-1801 is modified (O-(pantetheine 4'-phosphoryl)serine). Residues 1879-2151 (SPHPRSTSIL…ELGSFIGNAM (273 aa)) are claisen cyclase domain. Catalysis depends on Ser-1969, which acts as the For Claisen cyclase activity.

It catalyses the reaction 6 malonyl-CoA + acetyl-CoA + 6 H(+) = naphtopyrone YWA1 + 6 CO2 + 7 CoA + H2O. It participates in secondary metabolite biosynthesis. Its function is as follows. Non-reducing polyketide synthase; part of the gene cluster that mediates the biosynthesis of aurasperone B, a dimeric gamma-naphthopyrone. The first step in the biosynthesis of aurasperone B is the production of gamma-naphthopyrone precursor YWA1 by the non-reducing polyketide synthase albA, via condensation of one acetyl-CoA starter unit with 6 malonyl-CoA units. YWA1 is then methylated by aunE at position C-6 to yield foncesin which is further methylated at position C-8 by aunD to produce fonsecin B. A key enzyme in the biosynthetic pathway is the cytochrome P450 monooxygenase aunB which catalyzes the oxidative dimerization of fonsecin B to aurasperone B. AunB also catalyzes the oxidative dimerization of rubrofusarin B into aurasperone A. The protein is Non-reducing polyketide synthase albA of Aspergillus niger (strain ATCC MYA-4892 / CBS 513.88 / FGSC A1513).